Reading from the N-terminus, the 444-residue chain is NADH-dependent flavin oxidoreductase nadA (444 aa).

Residues 37 to 40 (ERMC) and Q123 each bind FMN. A disordered region spans residues 127-149 (PGRQTPSHRQPEPISASDVPLDT). 192 to 195 (HAAH) provides a ligand contact to substrate. 345–346 (AR) contacts FMN.

Belongs to the NADH:flavin oxidoreductase/NADH oxidase family.

The protein localises to the cytoplasm. Its subcellular location is the cytosol. NADH-dependent flavin oxidoreductase; part of the gene cluster that mediates the biosynthesis of aflatoxins, a group of polyketide-derived furanocoumarins, and part of the most toxic and carcinogenic compounds among the known mycotoxins. The four major aflatoxins produced by A.parasiticus are aflatoxin B1 (AFB1), aflatoxin B2 (AFB2), aflatoxin G1 (AFG1) and aflatoxin G2 (AFG2). Within the aflatoxin pathway, the NADH-dependent flavin oxidoreductase nadA is specifically required for the last steps in which OMST is converted specifically to aflatoxin G1. The biosynthesis of aflatoxins begins with the norsolorinic acid synthase aflC that combines a hexanoyl starter unit produced by the fatty acid synthase aflA/aflB and 7 malonyl-CoA extender units to synthesize the precursor NOR. The second step is the conversion of NOR to averantin and requires the norsolorinic acid ketoreductase aflD, which catalyzes the dehydration of norsolorinic acid to form (1'S)-averantin. The norsolorinic acid reductases aflE and aflF may also play a role in the conversion of NOR to AVN. The cytochrome P450 monooxygenase aflG then catalyzes the hydroxylation of AVN to 5'hydroxyaverantin (HAVN). The next step is performed by the 5'-hydroxyaverantin dehydrogenase aflH that transforms HAVN to 5'-oxoaverantin (OAVN) which is further converted to averufin (AVF) by aflK that plays a dual role in the pathway, as a 5'-oxoaverantin cyclase that mediates conversion of 5'-oxoaverantin, as well as a versicolorin B synthase in a later step in the pathway. The averufin oxidase aflI catalyzes the conversion of AVF to versiconal hemiacetal acetate (VHA). VHA is then the substrate for the versiconal hemiacetal acetate esterase aflJ to yield versiconal (VAL). Versicolorin B synthase aflK then converts VAL to versicolorin B (VERB) by closing the bisfuran ring of aflatoxin which is required for DNA-binding, thus giving to aflatoxin its activity as a mutagen. Then, the activity of the versicolorin B desaturase aflL leads to versicolorin A (VERA). A branch point starts from VERB since it can also be converted to dihydrodemethylsterigmatocystin (DMDHST), probably also by aflL, VERA being a precursor for aflatoxins B1 and G1, and DMDHST for aflatoxins B2 and G2. Next, the versicolorin reductase aflM and the cytochrome P450 monooxygenase aflN are involved in conversion of VERA to demethylsterigmatocystin (DMST). AflX and aflY seem also involved in this step, through probable aflX-mediated epoxide ring-opening step following versicolorin A oxidation and aflY-mediated Baeyer-Villiger oxidation required for the formation of the xanthone ring. The methyltransferase aflO then leads to the modification of DMST to sterigmatocystin (ST), and of DMDHST to dihydrosterigmatocystin (DHST). Both ST and DHST are then substrates of the O-methyltransferase aflP to yield O-methylsterigmatocystin (OMST) and dihydro-O-methylsterigmatocystin (DHOMST), respectively. Finally OMST is converted to aflatoxins B1 and G1, and DHOMST to aflatoxins B2 and G2, via the action of several enzymes including O-methylsterigmatocystin oxidoreductase aflQ, the cytochrome P450 monooxygenase aflU, but also the NADH-dependent flavin oxidoreductase nadA which is specifically required for the synthesis of AFG1. The polypeptide is NADH-dependent flavin oxidoreductase nadA (Aspergillus parasiticus (strain ATCC 56775 / NRRL 5862 / SRRC 143 / SU-1)).